Here is a 483-residue protein sequence, read N- to C-terminus: MESLSKESYLSSFHQFPSYAPLPDHIKFESVSSKKIQCSALENISPHQYDILQAPNSRALISALKTLQEKICRLELEKTHARDRLTNLTRVAGEHKKVLESEKQSAELAAKEATNQQNDIGKQLNNAKQRCSLLEKQLDYMKEMMENADTQKTTIHEHQMLTQKEQKEIQSKLKKLEVLEKMCTRLSATHKSAETKIQHLEEKLSVEEQNRKALQDKAAQVQTSLEVNRILLSSASAQNSTQRKVKKKKQSKLKNSVSKEPPSKCFYPKAGELPFVAGKSTTSSHSLSANVQNVLHMMKHHSPQVSQKNPKTAEHKPSVLPGGSRTIPTRLISSFTGDNLSDILLALQDELGQMSFEHQELLRHINETKNTDMREDLERELDYVVKQMEIKSDQIMKLKRHQLNVNKLKKTAKLLKEQPRPTSVTKLAADKQNTGAKDPSTPRRKGDLADGSGTPNSKASLELLKSVRKIQMTLKKDDIMWEK.

A coiled-coil region spans residues Glu-94–Asn-228. Disordered regions lie at residues Ala-237–Pro-261, Pro-303–Arg-325, and Lys-416–Ser-460. Basic residues predominate over residues Arg-243–Lys-252. Positions Glu-375–Gln-418 form a coiled coil. Positions Arg-420–Gly-435 are enriched in polar residues.

Belongs to the translokin family. In terms of assembly, interacts with clip1, mis12, ndc80 and zwint. Interacts with gamma-tubulin.

The protein resides in the cytoplasm. The protein localises to the cytoskeleton. It is found in the microtubule organizing center. Its subcellular location is the centrosome. It localises to the chromosome. The protein resides in the centromere. The protein localises to the kinetochore. It is found in the spindle. Functionally, required for spindle microtubule attachment to both kinetochores and centrosomes. Also functions to tether minus-ends of spindle microtubules to centrosomes. May act by forming ring-like structures around microtubules, or by serving as a cross-linker or scaffold at the attachment site. The protein is Centrosomal protein cep57l1 (cep57l1) of Xenopus tropicalis (Western clawed frog).